The following is a 216-amino-acid chain: Ras-related protein Rab11A (216 aa).

GTP contacts are provided by residues 19–27, 38–44, 67–71, 125–128, and 155–157; these read GDSGVGKSN, CLESKST, DTAGQ, NKSD, and SAL. The Effector region motif lies at 41-49; the sequence is SKSTIGVEF. S-geranylgeranyl cysteine attachment occurs at residues Cys213 and Cys214.

This sequence belongs to the small GTPase superfamily. Rab family.

The protein localises to the cell membrane. This chain is Ras-related protein Rab11A (RAB11A), found in Nicotiana tabacum (Common tobacco).